The sequence spans 164 residues: Ribosome maturation factor RimM (164 aa).

The 72-residue stretch at 90–161 folds into the PRC barrel domain; sequence KGSYFIADLI…TVTIKPLEIW (72 aa).

This sequence belongs to the RimM family. In terms of assembly, binds ribosomal protein uS19.

The protein resides in the cytoplasm. Its function is as follows. An accessory protein needed during the final step in the assembly of 30S ribosomal subunit, possibly for assembly of the head region. Essential for efficient processing of 16S rRNA. May be needed both before and after RbfA during the maturation of 16S rRNA. It has affinity for free ribosomal 30S subunits but not for 70S ribosomes. This is Ribosome maturation factor RimM from Clostridium botulinum (strain Langeland / NCTC 10281 / Type F).